A 214-amino-acid polypeptide reads, in one-letter code: A-type ATP synthase subunit D (214 aa).

The protein belongs to the V-ATPase D subunit family. In terms of assembly, has multiple subunits with at least A(3), B(3), C, D, E, F, H, I and proteolipid K(x).

The protein resides in the cell membrane. Functionally, component of the A-type ATP synthase that produces ATP from ADP in the presence of a proton gradient across the membrane. This Thermococcus gammatolerans (strain DSM 15229 / JCM 11827 / EJ3) protein is A-type ATP synthase subunit D.